The primary structure comprises 651 residues: MSESTPEVSSSYPPPAHFAEHANARAELYREAEEDRLAFWAKQANRLSWTTPFTEVLDWSGAPFAKWFVGGELNVAYNCVDRHVEAGHGDRVAIHWEGEPVGDRRTLTYSDLLAEVSKAANALTDLGLVAGDRVAIYLPLIPEAVIAMLACARLGIMHSVVFGGFTAAALQARIVDAQAKLLITADGQFRRGKPSPLKAAADEALAAIPDCSVEHVLVVRRTGIEMAWSEGRDLWWHHVVGSASPAHTPEPFDSEHPLFLLYTSGTTGKPKGIMHTSGGYLTQCCYTMRTIFDVKPDSDVFWCTADIGWVTGHTYGVYGPLCNGVTEVLYEGTPDTPDRHRHFQIIEKYGVTIYYTAPTLIRMFMKWGREIPDSHDLSSLRLLGSVGEPINPEAWRWYRDVIGGGRTPLVDTWWQTETGSAMISPLPGIAAAKPGSAMTPLPGISAKIVDDHGDPLPPHTEGAQHVTGYLVLDQPWPSMLRGIWGDPARYWHSYWSKFSDKGYYFAGDGARIDPDGAIWVLGRIDDVMNVSGHRISTAEVESALVAHSGVAEAAVVGVTDETTTQAICAFVVLRANYAPHDRTAEELRTEVARVISPIARPRDVHVVPELPKTRSGKIMRRLLRDVAENRELGDTSTLLDPTVFDAIRAAK.

Residues 190 to 193 (RRGK) and threonine 311 contribute to the CoA site. ATP is bound by residues 387 to 389 (GEP), 411 to 416 (DTWWQT), aspartate 508, and arginine 523. Position 531 (serine 531) interacts with CoA. Position 534 (arginine 534) interacts with ATP. Valine 545, histidine 547, and valine 550 together coordinate Mg(2+). Lysine 617 bears the N6-acetyllysine mark.

This sequence belongs to the ATP-dependent AMP-binding enzyme family. Mg(2+) serves as cofactor. In terms of processing, acetylated. Deacetylation by the SIR2-homolog deacetylase activates the enzyme.

The catalysed reaction is acetate + ATP + CoA = acetyl-CoA + AMP + diphosphate. In terms of biological role, catalyzes the conversion of acetate into acetyl-CoA (AcCoA), an essential intermediate at the junction of anabolic and catabolic pathways. AcsA undergoes a two-step reaction. In the first half reaction, AcsA combines acetate with ATP to form acetyl-adenylate (AcAMP) intermediate. In the second half reaction, it can then transfer the acetyl group from AcAMP to the sulfhydryl group of CoA, forming the product AcCoA. M.tuberculosis may use AcsA for both acetate and propionate assimilation. This is Acetyl-coenzyme A synthetase from Mycobacterium tuberculosis (strain CDC 1551 / Oshkosh).